The following is a 151-amino-acid chain: UPF0178 protein CPS_3584 (151 aa).

The protein belongs to the UPF0178 family.

In Colwellia psychrerythraea (strain 34H / ATCC BAA-681) (Vibrio psychroerythus), this protein is UPF0178 protein CPS_3584.